Consider the following 625-residue polypeptide: Tumor necrosis factor receptor superfamily member 11A (625 aa).

Positions 1 to 30 (MAPRARRRRQLPAPLLALCVLLVPLQVTLQ) are cleaved as a signal peptide. Over 31 to 214 (VTPPCTQERH…PKEAQAYLPS (184 aa)) the chain is Extracellular. 9 disulfide bridges follow: C35-C47, C48-C61, C51-C69, C72-C87, C93-C113, C115-C128, C125-C127, C134-C152, and C155-C170. TNFR-Cys repeat units lie at residues 35 to 69 (CTQERHYEHLGRCCSRCEPGKYLSSKCTPTSDSVC), 72 to 113 (CGPD…PRRC), 115 to 152 (CTAGYHWNSDCECCRRNTECAPGFGAQHPLQLNKDTVC), and 155 to 195 (CLLG…DVVC). An N-linked (GlcNAc...) asparagine glycan is attached at N106. Na(+)-binding residues include C134, A135, F138, S161, and V163. Residue N175 is glycosylated (N-linked (GlcNAc...) asparagine). A disulfide bridge links C176 with C195. Residues 215–234 (LIVLLLFISVVVVAAIIFGV) traverse the membrane as a helical segment. The Cytoplasmic segment spans residues 235–625 (YYRKGGKALT…HTQGSGQCAE (391 aa)). Disordered regions lie at residues 331-356 (TQGDLSRKIPTEDEYTDRPSQPSTGS), 388-413 (GTESTVDSEGCDFTEPPSRTDSMPVS), and 479-524 (SMAE…FISS). Over residues 499-511 (SGSSPSDQPPASG) the composition is skewed to low complexity. Residues 512-524 (NVTGNSNSTFISS) are compositionally biased toward polar residues. The interval 532-537 (GDIIVV) is required for interaction with EEIG1 and osteoclast differentiation. The tract at residues 542 to 625 (TSQEGPGSAE…HTQGSGQCAE (84 aa)) is disordered. Low complexity predominate over residues 543–558 (SQEGPGSAEPESEPVG). Basic and acidic residues predominate over residues 561–571 (VQEETLAHRDS). At S571 the chain carries Phosphoserine. Over residues 603–625 (RPVQEQGGAQTSLHTQGSGQCAE) the composition is skewed to polar residues.

In terms of assembly, binds to the clefts between the subunits of the TNFSF11 ligand trimer to form a heterohexamer. Part of a complex composed of EEIG1, TNFRSF11A/RANK, PLCG2, GAB2, TEC and BTK; complex formation increases in the presence of TNFSF11/RANKL. Interacts with TRAF1, TRAF2, TRAF3, TRAF5 and TRAF6. Interacts (via cytoplasmic domain) with GAB2. Interacts (via cytoplasmic domain); with EEIG1 (via N-terminus); when in the presence of TNFSF11/RANKL. In terms of tissue distribution, ubiquitous expression with high levels in trabecular bone, thymus, small intestine, lung, brain and kidney. Weakly expressed in spleen and bone marrow.

The protein localises to the cell membrane. Its subcellular location is the membrane raft. Its function is as follows. Receptor for TNFSF11/RANKL/TRANCE/OPGL; essential for RANKL-mediated osteoclastogenesis. Its interaction with EEIG1 promotes osteoclastogenesis via facilitating the transcription of NFATC1 and activation of PLCG2. Involved in the regulation of interactions between T-cells and dendritic cells. This Mus musculus (Mouse) protein is Tumor necrosis factor receptor superfamily member 11A (Tnfrsf11a).